A 285-amino-acid polypeptide reads, in one-letter code: Extracellular metalloprotease NCU07200 (285 aa).

The signal sequence occupies residues 1–18; it reads MQIKSFLLAAAAAPAALG. His-197 lines the Zn(2+) pocket. Residue Glu-198 is part of the active site. Position 201 (His-201) interacts with Zn(2+). Residues Cys-233 and Cys-260 are joined by a disulfide bond. An N-linked (GlcNAc...) asparagine glycan is attached at Asn-282.

This sequence belongs to the peptidase M43B family.

It is found in the secreted. Secreted metalloproteinase that allows assimilation of proteinaceous substrates. The chain is Extracellular metalloprotease NCU07200 from Neurospora crassa (strain ATCC 24698 / 74-OR23-1A / CBS 708.71 / DSM 1257 / FGSC 987).